The primary structure comprises 42 residues: Photosystem I reaction center subunit IX (42 aa).

Residues 7–27 (YLSTAPVLAAVWFGFLAGLLI) form a helical membrane-spanning segment.

The protein belongs to the PsaJ family.

The protein localises to the plastid. It is found in the chloroplast thylakoid membrane. Its function is as follows. May help in the organization of the PsaE and PsaF subunits. The protein is Photosystem I reaction center subunit IX of Nephroselmis olivacea (Green alga).